A 291-amino-acid chain; its full sequence is Methionine aminopeptidase (291 aa).

His118 serves as a coordination point for substrate. Residues Asp135, Asp146, and His209 each contribute to the a divalent metal cation site. His216 provides a ligand contact to substrate. 2 residues coordinate a divalent metal cation: Glu241 and Glu273.

Belongs to the peptidase M24A family. Methionine aminopeptidase type 1 subfamily. In terms of assembly, monomer. It depends on Co(2+) as a cofactor. Zn(2+) serves as cofactor. Mn(2+) is required as a cofactor. Requires Fe(2+) as cofactor.

The enzyme catalyses Release of N-terminal amino acids, preferentially methionine, from peptides and arylamides.. In terms of biological role, removes the N-terminal methionine from nascent proteins. The N-terminal methionine is often cleaved when the second residue in the primary sequence is small and uncharged (Met-Ala-, Cys, Gly, Pro, Ser, Thr, or Val). Requires deformylation of the N(alpha)-formylated initiator methionine before it can be hydrolyzed. The sequence is that of Methionine aminopeptidase from Chlamydia pneumoniae (Chlamydophila pneumoniae).